The primary structure comprises 509 residues: Maturase K (509 aa).

The protein belongs to the intron maturase 2 family. MatK subfamily.

It localises to the plastid. Its subcellular location is the chloroplast. In terms of biological role, usually encoded in the trnK tRNA gene intron. Probably assists in splicing its own and other chloroplast group II introns. This is Maturase K from Nicotiana plumbaginifolia (Leadwort-leaved tobacco).